Reading from the N-terminus, the 375-residue chain is Alcohol dehydrogenase 1A (375 aa).

Ser2 bears the N-acetylserine mark. Ser23 is modified (phosphoserine). Tyr35 carries the post-translational modification Phosphotyrosine. Cys47 provides a ligand contact to Zn(2+). 48–52 (GTDDH) lines the NAD(+) pocket. Positions 68, 98, 101, 104, 112, and 175 each coordinate Zn(2+). NAD(+) contacts are provided by residues 200–205 (GLGGVG), Asp224, Lys229, Ile270, 293–295 (VGV), 318–320 (AVY), and Arg370.

This sequence belongs to the zinc-containing alcohol dehydrogenase family. Dimer of identical or heterodimer of closely related subunits alpha, beta, or gamma that are encoded by genes ADH1A, ADH1B, and ADH1C, respectively. Zn(2+) serves as cofactor.

The protein resides in the cytoplasm. The enzyme catalyses a primary alcohol + NAD(+) = an aldehyde + NADH + H(+). It catalyses the reaction a secondary alcohol + NAD(+) = a ketone + NADH + H(+). The catalysed reaction is butan-1-ol + NAD(+) = butanal + NADH + H(+). It carries out the reaction 1-propanol + NAD(+) = propanal + NADH + H(+). The enzyme catalyses propan-2-ol + NAD(+) = acetone + NADH + H(+). Functionally, alcohol dehydrogenase. Oxidizes primary as well as secondary alcohols. Ethanol is a very poor substrate. This chain is Alcohol dehydrogenase 1A (ADH1A), found in Macaca mulatta (Rhesus macaque).